The sequence spans 314 residues: tRNA dimethylallyltransferase (314 aa).

An ATP-binding site is contributed by 12–19 (GPTASGKT). 14-19 (TASGKT) provides a ligand contact to substrate. Interaction with substrate tRNA stretches follow at residues 37 to 40 (DSAL), 161 to 165 (QRIQR), and 244 to 249 (RCVGYR).

Belongs to the IPP transferase family. Monomer. Mg(2+) is required as a cofactor.

It catalyses the reaction adenosine(37) in tRNA + dimethylallyl diphosphate = N(6)-dimethylallyladenosine(37) in tRNA + diphosphate. Functionally, catalyzes the transfer of a dimethylallyl group onto the adenine at position 37 in tRNAs that read codons beginning with uridine, leading to the formation of N6-(dimethylallyl)adenosine (i(6)A). This is tRNA dimethylallyltransferase from Janthinobacterium sp. (strain Marseille) (Minibacterium massiliensis).